We begin with the raw amino-acid sequence, 126 residues long: 13 kDa ribonucleoprotein-associated protein (126 aa).

It belongs to the eukaryotic ribosomal protein eL8 family. As to quaternary structure, component of the U3 snoRNP particle. Binds to the C'/D and B/C motifs in U3 snoRNA. Component of the 25S U4/U6.U5 tri-snRNP particle, a subcomplex of the spliceosome. Binds to the 5' stem-loop of U4 snRNA.

It localises to the nucleus. Its subcellular location is the nucleolus. In terms of biological role, common component of the spliceosome and rRNA processing machinery. In association with the spliceosomal U4/U6.U5 tri-snRNP particle, required for splicing of pre-mRNA. In association with box C/D snoRNPs, required for processing of pre-ribosomal RNA (rRNA) and site-specific 2'-O-methylation of substrate RNAs. Essential for the accumulation and stability of U4 snRNA, U6 snRNA, and box C/D snoRNAs. This Candida glabrata (strain ATCC 2001 / BCRC 20586 / JCM 3761 / NBRC 0622 / NRRL Y-65 / CBS 138) (Yeast) protein is 13 kDa ribonucleoprotein-associated protein (SNU13).